We begin with the raw amino-acid sequence, 50 residues long: Photosystem II reaction center protein K (50 aa).

Positions 1-13 (MLNLNFTNITVMG) are excised as a propeptide. Residues 25–45 (IVDILPIIPILFFLLAFVWQA) form a helical membrane-spanning segment.

Belongs to the PsbK family. PSII is composed of 1 copy each of membrane proteins PsbA, PsbB, PsbC, PsbD, PsbE, PsbF, PsbH, PsbI, PsbJ, PsbK, PsbL, PsbM, PsbT, PsbY, PsbZ, Psb30/Ycf12, at least 3 peripheral proteins of the oxygen-evolving complex and a large number of cofactors. It forms dimeric complexes.

Its subcellular location is the plastid. It is found in the chloroplast thylakoid membrane. One of the components of the core complex of photosystem II (PSII). PSII is a light-driven water:plastoquinone oxidoreductase that uses light energy to abstract electrons from H(2)O, generating O(2) and a proton gradient subsequently used for ATP formation. It consists of a core antenna complex that captures photons, and an electron transfer chain that converts photonic excitation into a charge separation. In Euglena myxocylindracea, this protein is Photosystem II reaction center protein K.